Reading from the N-terminus, the 642-residue chain is Threonine--tRNA ligase (642 aa).

One can recognise a TGS domain in the interval 1–61; sequence MPIITLPDGS…EHDASLEIIT (61 aa). The interval 244–535 is catalytic; it reads DHRKIGKQLD…LIEEYAGFFP (292 aa). Zn(2+)-binding residues include C335, H386, and H512.

It belongs to the class-II aminoacyl-tRNA synthetase family. Homodimer. It depends on Zn(2+) as a cofactor.

It is found in the cytoplasm. The catalysed reaction is tRNA(Thr) + L-threonine + ATP = L-threonyl-tRNA(Thr) + AMP + diphosphate + H(+). Its function is as follows. Catalyzes the attachment of threonine to tRNA(Thr) in a two-step reaction: L-threonine is first activated by ATP to form Thr-AMP and then transferred to the acceptor end of tRNA(Thr). Also edits incorrectly charged L-seryl-tRNA(Thr). The protein is Threonine--tRNA ligase of Vibrio cholerae serotype O1 (strain M66-2).